A 537-amino-acid chain; its full sequence is Cytochrome P450 monooxygenase yanC (537 aa).

The N-terminal stretch at 1–21 (MALVHLTALAACGLLLVILRA) is a signal peptide. Cys449 provides a ligand contact to heme.

Belongs to the cytochrome P450 family. It depends on heme as a cofactor.

It functions in the pathway secondary metabolite biosynthesis; terpenoid biosynthesis. Cytochrome P450 monooxygenase; part of the gene cluster that mediates the biosynthesis of yanuthone D, a fungal isoprenoid epoxycyclohexenone that acts as an antibiotic against fungi and bacteria. The first step of the pathway is the synthesis of 6-methylsalicylic acid (6-MSA) by the polyketide synthase yanA. 6-MSA is then converted to m-cresol by the decarboxylase yanB. The cytochrome P450 monooxygenase yanC then catalyzes the oxidation of m-cresol to toluquinol. Epoxidation of toluquinol is then performed by the short chain dehydrogenase yanD, with the help of yanE, and a further prenylation by yanG leads to 7-deacetoxyyanuthone A. The next step is the hydroxylation of C-22 of 7-deacetoxyyanuthone A by the cytochrome P450 monooxygenase yanH to yield 22-deacetylyanuthone A. O-Mevalon transferase yanI then attaches mevalon to the hydroxyl group of 22-deacetylyanuthone A to produce yanuthone E. Finally, the FAD-dependent monooxygenase yanF oxidizes the hydroxyl group at C15 of yanuthone E to form yanuthone D. Furthermore, several branching points in the pathway lead to the production of yanuthones F and G from 7-deacetoxyyanuthone A; yanuthones H and I from 22-deacetylyanuthone A; and yanuthone J from yanuthone E. YanC is also involved in the synthesis of yanuthone X1 which does not have 6-methylsalicylic acid (6-MSA) as precursor. The chain is Cytochrome P450 monooxygenase yanC from Aspergillus niger (strain ATCC 1015 / CBS 113.46 / FGSC A1144 / LSHB Ac4 / NCTC 3858a / NRRL 328 / USDA 3528.7).